The following is a 91-amino-acid chain: Small ribosomal subunit protein uS15 (91 aa).

This sequence belongs to the universal ribosomal protein uS15 family. In terms of assembly, part of the 30S ribosomal subunit. Forms a bridge to the 50S subunit in the 70S ribosome, contacting the 23S rRNA.

In terms of biological role, one of the primary rRNA binding proteins, it binds directly to 16S rRNA where it helps nucleate assembly of the platform of the 30S subunit by binding and bridging several RNA helices of the 16S rRNA. Its function is as follows. Forms an intersubunit bridge (bridge B4) with the 23S rRNA of the 50S subunit in the ribosome. This Rickettsia typhi (strain ATCC VR-144 / Wilmington) protein is Small ribosomal subunit protein uS15.